Here is a 305-residue protein sequence, read N- to C-terminus: Fumarylacetoacetate hydrolase domain-containing protein 2 homolog (305 aa).

Residues Glu-141, Glu-143, and Asp-172 each contribute to the a divalent metal cation site.

It belongs to the FAH family. Ca(2+) serves as cofactor. Requires Mg(2+) as cofactor.

Its function is as follows. May have hydrolase activity. The polypeptide is Fumarylacetoacetate hydrolase domain-containing protein 2 homolog (fahd2) (Dictyostelium discoideum (Social amoeba)).